The following is a 305-amino-acid chain: Ribonuclease BN (305 aa).

The Zn(2+) site is built by His-64, His-66, Asp-68, His-69, His-141, Asp-212, and His-270. The active-site Proton acceptor is the Asp-68.

The protein belongs to the RNase Z family. RNase BN subfamily. Homodimer. Requires Zn(2+) as cofactor.

In terms of biological role, zinc phosphodiesterase, which has both exoribonuclease and endoribonuclease activities. The polypeptide is Ribonuclease BN (Escherichia coli O139:H28 (strain E24377A / ETEC)).